We begin with the raw amino-acid sequence, 146 residues long: Hemoglobin subunit beta (146 aa).

Positions 2-146 (PFSAHEEKLI…VAAALSVEYY (145 aa)) constitute a Globin domain. 2 residues coordinate heme b: histidine 63 and histidine 92.

This sequence belongs to the globin family. As to quaternary structure, heterotetramer of two alpha chains and two beta chains. When oxygenated in vitro, exists virtually only in polymeric form. When deoxygenated, forms tetramers, octamers and larger polymers. As to expression, red blood cells.

Functionally, involved in oxygen transport from the lung to the various peripheral tissues. The chain is Hemoglobin subunit beta from Paleosuchus palpebrosus (Cuvier's smooth-fronted caiman).